A 331-amino-acid chain; its full sequence is Adenosine deaminase (331 aa).

2 residues coordinate Zn(2+): histidine 12 and histidine 14. The substrate site is built by histidine 14 and aspartate 16. Position 197 (histidine 197) interacts with Zn(2+). Glutamate 200 acts as the Proton donor in catalysis. Zn(2+) is bound at residue aspartate 278.

It belongs to the metallo-dependent hydrolases superfamily. Adenosine and AMP deaminases family. Adenosine deaminase subfamily. Requires Zn(2+) as cofactor.

It carries out the reaction adenosine + H2O + H(+) = inosine + NH4(+). The catalysed reaction is 2'-deoxyadenosine + H2O + H(+) = 2'-deoxyinosine + NH4(+). Its function is as follows. Catalyzes the hydrolytic deamination of adenosine and 2-deoxyadenosine. This Shewanella halifaxensis (strain HAW-EB4) protein is Adenosine deaminase.